We begin with the raw amino-acid sequence, 426 residues long: Serine hydroxymethyltransferase (426 aa).

Residues Leu113 and Gly117–Leu119 each bind (6S)-5,6,7,8-tetrahydrofolate. Lys222 is subject to N6-(pyridoxal phosphate)lysine. A (6S)-5,6,7,8-tetrahydrofolate-binding site is contributed by Ser363–Phe365.

Belongs to the SHMT family. As to quaternary structure, homodimer. It depends on pyridoxal 5'-phosphate as a cofactor.

It localises to the cytoplasm. The enzyme catalyses (6R)-5,10-methylene-5,6,7,8-tetrahydrofolate + glycine + H2O = (6S)-5,6,7,8-tetrahydrofolate + L-serine. It participates in one-carbon metabolism; tetrahydrofolate interconversion. It functions in the pathway amino-acid biosynthesis; glycine biosynthesis; glycine from L-serine: step 1/1. In terms of biological role, catalyzes the reversible interconversion of serine and glycine with tetrahydrofolate (THF) serving as the one-carbon carrier. This reaction serves as the major source of one-carbon groups required for the biosynthesis of purines, thymidylate, methionine, and other important biomolecules. Also exhibits THF-independent aldolase activity toward beta-hydroxyamino acids, producing glycine and aldehydes, via a retro-aldol mechanism. The protein is Serine hydroxymethyltransferase of Phocaeicola vulgatus (strain ATCC 8482 / DSM 1447 / JCM 5826 / CCUG 4940 / NBRC 14291 / NCTC 11154) (Bacteroides vulgatus).